Reading from the N-terminus, the 327-residue chain is Acetyl-coenzyme A carboxylase carboxyl transferase subunit alpha (327 aa).

In terms of domain architecture, CoA carboxyltransferase C-terminal spans 46–299 (LEARAIQLRR…RQVLLRHLKD (254 aa)).

It belongs to the AccA family. Acetyl-CoA carboxylase is a heterohexamer composed of biotin carboxyl carrier protein (AccB), biotin carboxylase (AccC) and two subunits each of ACCase subunit alpha (AccA) and ACCase subunit beta (AccD).

It localises to the cytoplasm. It carries out the reaction N(6)-carboxybiotinyl-L-lysyl-[protein] + acetyl-CoA = N(6)-biotinyl-L-lysyl-[protein] + malonyl-CoA. Its pathway is lipid metabolism; malonyl-CoA biosynthesis; malonyl-CoA from acetyl-CoA: step 1/1. Functionally, component of the acetyl coenzyme A carboxylase (ACC) complex. First, biotin carboxylase catalyzes the carboxylation of biotin on its carrier protein (BCCP) and then the CO(2) group is transferred by the carboxyltransferase to acetyl-CoA to form malonyl-CoA. This is Acetyl-coenzyme A carboxylase carboxyl transferase subunit alpha from Synechococcus elongatus (strain ATCC 33912 / PCC 7942 / FACHB-805) (Anacystis nidulans R2).